Consider the following 294-residue polypeptide: Ribosomal RNA small subunit methyltransferase H (294 aa).

S-adenosyl-L-methionine contacts are provided by residues 40–42, D59, F86, D102, and Q109; that span reads GGH.

This sequence belongs to the methyltransferase superfamily. RsmH family.

The protein resides in the cytoplasm. The catalysed reaction is cytidine(1402) in 16S rRNA + S-adenosyl-L-methionine = N(4)-methylcytidine(1402) in 16S rRNA + S-adenosyl-L-homocysteine + H(+). Its function is as follows. Specifically methylates the N4 position of cytidine in position 1402 (C1402) of 16S rRNA. The polypeptide is Ribosomal RNA small subunit methyltransferase H (Cyanothece sp. (strain PCC 7425 / ATCC 29141)).